The chain runs to 877 residues: Leucine--tRNA ligase (877 aa).

The short motif at 50 to 60 (PYPSGKLHMGH) is the 'HIGH' region element. The 'KMSKS' region signature appears at 634–638 (KMSKS). Lysine 637 is a binding site for ATP.

Belongs to the class-I aminoacyl-tRNA synthetase family.

It localises to the cytoplasm. The enzyme catalyses tRNA(Leu) + L-leucine + ATP = L-leucyl-tRNA(Leu) + AMP + diphosphate. This Hydrogenovibrio crunogenus (strain DSM 25203 / XCL-2) (Thiomicrospira crunogena) protein is Leucine--tRNA ligase.